Consider the following 250-residue polypeptide: Probable dihydroorotate dehydrogenase B (NAD(+)), electron transfer subunit (250 aa).

One can recognise an FAD-binding FR-type domain in the interval 1-89 (MNRITVDQVR…RGPYGNGFQI (89 aa)). [2Fe-2S] cluster contacts are provided by cysteine 200, cysteine 205, cysteine 208, and cysteine 216.

The protein belongs to the PyrK family. Heterotetramer of 2 PyrK and 2 PyrD type B subunits. [2Fe-2S] cluster serves as cofactor. FAD is required as a cofactor.

It functions in the pathway pyrimidine metabolism; UMP biosynthesis via de novo pathway; orotate from (S)-dihydroorotate (NAD(+) route): step 1/1. Responsible for channeling the electrons from the oxidation of dihydroorotate from the FMN redox center in the PyrD type B subunit to the ultimate electron acceptor NAD(+). The chain is Probable dihydroorotate dehydrogenase B (NAD(+)), electron transfer subunit from Thermoplasma acidophilum (strain ATCC 25905 / DSM 1728 / JCM 9062 / NBRC 15155 / AMRC-C165).